A 452-amino-acid polypeptide reads, in one-letter code: MKQTFRFIKPIERITHLKPNATMMLFLASVLAVIMANSSLSTIYHEILEYPINLTIGGHEVFSHHGETMTLLQFVNDVLMVIFFLAVGLEIKQEILVGELSSFKKAMLPIVGAIGGMIVPVLFFLLVVHEGPGARGAAIPMSTDIAFALAALAVLGSRVPASLKVFLTALAVADDIGGIIVIALFYSSHINIGMLAIAFGILFIMYLMGRMHVSNLGLYFVCTFFVWLFFLQSGIHTTIAGVLAAFMIPARPGLHAKNLRAEMRSLFEAMPNDKIRQSGSSLILSHNQINVINSMRKIARKAISPMQLMEEYLSPIVGYFVLPLFAFANAGITLGGVTADALWGVPMAVFLGLFVGKPLGIYFFTYGFVKMRLCPWPEGMSRLNLMAVSLFGGIGFTVSLFIATLSYAGAEHLLFLNEAKLGIFVASIFAALVGIVTLRYELNLESAKAQKS.

The next 11 helical transmembrane spans lie at 23–43, 71–91, 108–128, 136–156, 165–185, 189–209, 216–236, 316–336, 349–369, 385–405, and 418–438; these read MMLF…LSTI, LLQF…GLEI, LPIV…LLVV, GAAI…AVLG, VFLT…IALF, HINI…YLMG, LGLY…SGIH, IVGY…TLGG, VFLG…YGFV, LMAV…IATL, and EAKL…IVTL.

The protein belongs to the NhaA Na(+)/H(+) (TC 2.A.33) antiporter family.

It is found in the cell inner membrane. It carries out the reaction Na(+)(in) + 2 H(+)(out) = Na(+)(out) + 2 H(+)(in). Functionally, na(+)/H(+) antiporter that extrudes sodium in exchange for external protons. The polypeptide is Na(+)/H(+) antiporter NhaA (Porphyromonas gingivalis (strain ATCC BAA-308 / W83)).